A 277-amino-acid chain; its full sequence is Small ribosomal subunit protein uS2 (277 aa).

The segment at 226–277 (GQQARADRGEDLGAAVEPVAEPALVEEAAAPVTEDEQVPAEAAAETERQSDA) is disordered. A compositionally biased stretch (low complexity) spans 239-257 (AAVEPVAEPALVEEAAAPV).

Belongs to the universal ribosomal protein uS2 family.

In Sphingopyxis alaskensis (strain DSM 13593 / LMG 18877 / RB2256) (Sphingomonas alaskensis), this protein is Small ribosomal subunit protein uS2.